A 477-amino-acid chain; its full sequence is Cysteine--tRNA ligase (477 aa).

Residue cysteine 29 participates in Zn(2+) binding. The 'HIGH' region motif lies at 31-41; that stretch reads PTVQASPHIGH. Zn(2+) contacts are provided by cysteine 219, histidine 244, and glutamate 248. Positions 275–279 match the 'KMSKS' region motif; the sequence is KMSKS. Lysine 278 is a binding site for ATP.

Belongs to the class-I aminoacyl-tRNA synthetase family. As to quaternary structure, monomer. Zn(2+) is required as a cofactor.

It localises to the cytoplasm. The enzyme catalyses tRNA(Cys) + L-cysteine + ATP = L-cysteinyl-tRNA(Cys) + AMP + diphosphate. The sequence is that of Cysteine--tRNA ligase from Leifsonia xyli subsp. xyli (strain CTCB07).